The following is an 873-amino-acid chain: Zinc fingers and homeoboxes protein 1 (873 aa).

The tract at residues 24–63 (LISDLDEGPPVLTPVENTRAESISSDEEVHESVDSDNQQN) is disordered. T36 bears the Phosphothreonine mark. Phosphoserine is present on residues S45, S47, and S48. C2H2-type zinc fingers lie at residues 70 to 93 (YECK…DSEH) and 102 to 125 (YVCV…LKYH). K159 participates in a covalent cross-link: Glycyl lysine isopeptide (Lys-Gly) (interchain with G-Cter in SUMO2). Position 202 is a phosphoserine (S202). A disordered region spans residues 202 to 236 (SVEDVPEEKENEIKPDREEIVENPSSSASESNTST). The span at 212–221 (NEIKPDREEI) shows a compositional bias: basic and acidic residues. Residues 223-236 (ENPSSSASESNTST) show a composition bias toward low complexity. The interval 272 to 432 (NSNLIPKVLI…QNNIQKSQVP (161 aa)) is required for dimerization. Positions 272-564 (NSNLIPKVLI…AQPKQSWNPF (293 aa)) are required for interaction with NFYA. Positions 284 to 346 (NSIPTYNAAL…LKHGVSWTPE (63 aa)) form a DNA-binding region, homeobox 1. Glycyl lysine isopeptide (Lys-Gly) (interchain with G-Cter in SUMO2) cross-links involve residues K441, K454, K485, and K629. 2 DNA-binding regions (homeobox) span residues 464–526 (SFGI…KSNQ) and 569–630 (PQKF…EEKM). Disordered stretches follow at residues 626 to 667 (KEEK…ICKK) and 732 to 770 (SSMN…NNWD). Position 648 is a phosphoserine (S648). Residues 660-722 (STGKICKKTP…YAWKNGNLKW (63 aa)) constitute a DNA-binding region (homeobox 4). The interval 734–768 (MNGLSSLRKRGRGRPKGRGRGRPRGRPRGSKRINN) is required for nuclear localization. Residues 740-764 (LRKRGRGRPKGRGRGRPRGRPRGSK) are compositionally biased toward basic residues. Position 774 is a phosphoserine (S774). Residues 777–832 (KFKTGTAILKDYYLKHKFLNEQDLDELVNKSHMGYEQVREWFAERQRRSELGIELF) constitute a DNA-binding region (homeobox 5). The interval 829–873 (IELFEENEEEDEVIDDQEEDEEETDDSDTWEPPRHVKRKLSKSDD) is disordered. The span at 831-857 (LFEENEEEDEVIDDQEEDEEETDDSDT) shows a compositional bias: acidic residues. Residues 831–873 (LFEENEEEDEVIDDQEEDEEETDDSDTWEPPRHVKRKLSKSDD) form a required for repressor activity region. The segment covering 863–873 (HVKRKLSKSDD) has biased composition (basic residues).

Belongs to the ZHX family. In terms of assembly, forms homodimers. Heterodimer (via HD1 domain) with ZHX2 (via HD1 domain). Also forms a heterodimer with ZHX3 which is a prerequisite for repressor activity. Interacts with ATF7IP and NFYA. Interacts (via homeobox domains) with DNMT3B (via PWWP domain). As to expression, ubiquitously expressed. Expressed in podocytes.

Its subcellular location is the nucleus. In terms of biological role, acts as a transcriptional repressor. Increases DNMT3B-mediated repressive transcriptional activity when DNMT3B is tethered to DNA. May link molecule between DNMT3B and other co-repressor proteins. The sequence is that of Zinc fingers and homeoboxes protein 1 (ZHX1) from Homo sapiens (Human).